A 620-amino-acid chain; its full sequence is Alkaline nuclease (620 aa).

The span at 1-10 (MAAAATPGAK) shows a compositional bias: low complexity. Disordered regions lie at residues 1–122 (MAAA…SASA) and 595–620 (ASRSPGRGPAAADTTSSPPTAGRSSR). Basic and acidic residues predominate over residues 11-23 (RPADPARDPDSPP). Residues 40 to 49 (RPAPPRPTSP) are compositionally biased toward pro residues. Residues 603–620 (PAAADTTSSPPTAGRSSR) are compositionally biased toward low complexity.

The protein belongs to the herpesviridae alkaline nuclease family. As to quaternary structure, interacts with major DNA-binding protein; this interaction increases the nuclease processivity of the alkaline exonuclease.

The protein localises to the host nucleus. It localises to the host cytoplasm. Functionally, plays a role in processing non linear or branched viral DNA intermediates in order to promote the production of mature packaged unit-length linear progeny viral DNA molecules. Exhibits endonuclease and exonuclease activities and accepts both double-stranded and single-stranded DNA as substrate. Exonuclease digestion of DNA is in the 5'-&gt; 3' direction and the products are 5'-monophosphate nucleosides. Additionally, forms a recombinase with the major DNA-binding protein, which displays strand exchange activity. In Homo sapiens (Human), this protein is Alkaline nuclease.